The primary structure comprises 203 residues: Thymidylate kinase (203 aa).

Residue 10-17 (GIDGAGKS) participates in ATP binding.

The protein belongs to the thymidylate kinase family.

The enzyme catalyses dTMP + ATP = dTDP + ADP. In terms of biological role, phosphorylation of dTMP to form dTDP in both de novo and salvage pathways of dTTP synthesis. The chain is Thymidylate kinase from Cupriavidus necator (strain ATCC 17699 / DSM 428 / KCTC 22496 / NCIMB 10442 / H16 / Stanier 337) (Ralstonia eutropha).